A 110-amino-acid polypeptide reads, in one-letter code: Spermatid nuclear transition protein 3 (110 aa).

The tract at residues Arg-80–Arg-110 is disordered.

Its subcellular location is the nucleus. The protein localises to the chromosome. Functionally, involved in nuclear basic protein transition: histones are replaced by spermatid specific proteins which are themselves replaced by protamines in late spermatids. The chain is Spermatid nuclear transition protein 3 from Ovis aries (Sheep).